The chain runs to 255 residues: Ribonuclease PH (255 aa).

Phosphate-binding positions include R86 and 124-126 (GTR).

It belongs to the RNase PH family. In terms of assembly, homohexameric ring arranged as a trimer of dimers.

The catalysed reaction is tRNA(n+1) + phosphate = tRNA(n) + a ribonucleoside 5'-diphosphate. Its function is as follows. Phosphorolytic 3'-5' exoribonuclease that plays an important role in tRNA 3'-end maturation. Removes nucleotide residues following the 3'-CCA terminus of tRNAs; can also add nucleotides to the ends of RNA molecules by using nucleoside diphosphates as substrates, but this may not be physiologically important. Probably plays a role in initiation of 16S rRNA degradation (leading to ribosome degradation) during starvation. This Geobacillus sp. (strain WCH70) protein is Ribonuclease PH.